Reading from the N-terminus, the 131-residue chain is Sec-independent protein translocase protein TatB (131 aa).

A helical membrane pass occupies residues 2-22 (FDGIGFMELLLIGVLGLVVLG). A disordered region spans residues 69–131 (NQGLKNLAPE…ENAKSDKPNG (63 aa)). The span at 105-123 (AKETPAKETATTETTSTEN) shows a compositional bias: low complexity.

This sequence belongs to the TatB family. As to quaternary structure, the Tat system comprises two distinct complexes: a TatABC complex, containing multiple copies of TatA, TatB and TatC subunits, and a separate TatA complex, containing only TatA subunits. Substrates initially bind to the TatABC complex, which probably triggers association of the separate TatA complex to form the active translocon.

The protein resides in the cell inner membrane. Functionally, part of the twin-arginine translocation (Tat) system that transports large folded proteins containing a characteristic twin-arginine motif in their signal peptide across membranes. Together with TatC, TatB is part of a receptor directly interacting with Tat signal peptides. TatB may form an oligomeric binding site that transiently accommodates folded Tat precursor proteins before their translocation. In Shewanella piezotolerans (strain WP3 / JCM 13877), this protein is Sec-independent protein translocase protein TatB.